The following is a 289-amino-acid chain: Palmitoyl-protein thioesterase 3 (289 aa).

A signal peptide spans methionine 1–alanine 20. Serine 97 is a catalytic residue. 2 N-linked (GlcNAc...) asparagine glycosylation sites follow: asparagine 189 and asparagine 195. Active-site residues include aspartate 210 and histidine 266. Asparagine 281 carries an N-linked (GlcNAc...) asparagine glycan.

Belongs to the palmitoyl-protein thioesterase family.

Its subcellular location is the lysosome. The catalysed reaction is S-hexadecanoyl-L-cysteinyl-[protein] + H2O = L-cysteinyl-[protein] + hexadecanoate + H(+). Functionally, removes thioester-linked fatty acyl groups such as palmitate from modified cysteine residues in proteins or peptides during lysosomal degradation. The polypeptide is Palmitoyl-protein thioesterase 3 (ppt3) (Dictyostelium discoideum (Social amoeba)).